Here is a 377-residue protein sequence, read N- to C-terminus: P2Y purinoceptor 2 (377 aa).

Residues 1 to 32 (MAADLGPWNDTINGTWDGDELGYRCRFNEDFK) lie on the Extracellular side of the membrane. N-linked (GlcNAc...) asparagine glycans are attached at residues Asn9 and Asn13. A helical membrane pass occupies residues 33 to 59 (YVLLPVSYGVVCVPGLCLNAVALYIFL). At 60–70 (CRLKTWNASTT) the chain is on the cytoplasmic side. Residues 71-93 (YMFHLAVSDALYAASLPLLVYYY) form a helical membrane-spanning segment. Over 94-110 (ARGDHWPFSTVLCKLVR) the chain is Extracellular. The cysteines at positions 106 and 183 are disulfide-linked. Residues 111–129 (FLFYTNLYCSILFLTCISV) traverse the membrane as a helical segment. At 130–152 (HRCLGVLRPLRSLRWGRARYARR) the chain is on the cytoplasmic side. A helical transmembrane segment spans residues 153-172 (VAGAVWVLVLACQAPVLYFV). The Extracellular segment spans residues 173 to 194 (TTSARGGRVTCHDTSAPELFSR). The chain crosses the membrane as a helical span at residues 195 to 220 (FVAYSSVMLGLLFAVPFAVILVCYVL). Residues 221–246 (MARRLLKPAYGTSGGLPRAKRKSVRT) lie on the Cytoplasmic side of the membrane. Residues 247 to 269 (IAVVLAVFALCFLPFHVTRTLYY) traverse the membrane as a helical segment. Over 270 to 287 (SFRSLDLSCHTLNAINMA) the chain is Extracellular. Residues 288–309 (YKVTRPLASANSCLDPVLYFLA) traverse the membrane as a helical segment. Over 310 to 377 (GQRLVRFARD…GSENTKDIRL (68 aa)) the chain is Cytoplasmic. The disordered stretch occupies residues 318-377 (RDAKPPTGPSPATPARRRLGLRRSDRTDMQRIEDVLGSSEDSRRTESTPAGSENTKDIRL). Basic and acidic residues predominate over residues 339–363 (RRSDRTDMQRIEDVLGSSEDSRRTE).

It belongs to the G-protein coupled receptor 1 family. As to expression, spleen, testis, kidney, liver, lung, heart and brain.

Its subcellular location is the cell membrane. Its function is as follows. Receptor for ATP and UTP coupled to G-proteins that activate a phosphatidylinositol-calcium second messenger system. The affinity range is UTP = ATP &gt; ATP-gamma-S &gt;&gt; 2-methylthio-ATP = ADP. This chain is P2Y purinoceptor 2 (P2RY2), found in Homo sapiens (Human).